The primary structure comprises 622 residues: MALLQIAEPGQSAEPHKHRLAVGIDLGTTNSLVATVRNGIAVCLADEAGRSMLPSIVRYHADGRIEVGQTAAAAHTTDPKNTIMSVKRFMGRGLKDVSHVESTPYDFIDAGGMVRLRTVQGVKTPVEISAEILKTLGARAEASLGGPLTGAVITVPAYFDDAQRQATKDAAKLAGLNVLRLLNEPTAAAVAYGLDNASEGVYAIYDLGGGTFDLSILKLSRGIFEVLATNGDAALGGDDFDHRLFCWILDKAAIEPPTSDDSRRLLMKAREAKELLTASEEAPIRARLSSDEEVNLVVTREEFATMTQHLIAKTMAPMRKVLRDAGLGPEDVKGVVMVGGATRMPHVQRAVAEFFGQEPLTNLDPDKVVALGAAIQANVLAGNRKDEDEWLLLDVIPLSLGLETMGGLTEKVVPRNSTLPIARAQEFTTFKDGQTAMAFHVVQGEREMVKDCRSLARFELRGIPPMVAGAARIRVAFQVDADGLLSVSAREMSSGVEASVLVKPSYGLTDDEIASMLKEGVEHVGDDMHARALREQQVEAERVIEATTHALEQDGALLNADERASIEVAIAELKQLAAGDDPRIVKKGIEALARATDEFAARRMDNSIRSALAGHKVDEIQV.

This sequence belongs to the heat shock protein 70 family.

Its function is as follows. Chaperone involved in the maturation of iron-sulfur cluster-containing proteins. Has a low intrinsic ATPase activity which is markedly stimulated by HscB. The chain is Chaperone protein HscA homolog from Aromatoleum aromaticum (strain DSM 19018 / LMG 30748 / EbN1) (Azoarcus sp. (strain EbN1)).